Consider the following 47-residue polypeptide: PhoP/PhoQ regulator MgrB (47 aa).

A helical membrane pass occupies residues 6-26 (WVVLGIVVVVCLLLWAQVFNI).

The protein belongs to the MgrB family. May form homooligomers. Probably interacts with the periplasmic domain of PhoQ.

It is found in the cell inner membrane. PhoP-regulated transcription is redox-sensitive, being activated when the periplasm becomes more reducing. MgrB acts between DsbA/DsbB and PhoP/PhoQ in this pathway. Represses PhoP/PhoQ signaling, possibly by binding to the periplasmic domain of PhoQ, altering its activity and that of downstream effector PhoP. In Salmonella gallinarum (strain 287/91 / NCTC 13346), this protein is PhoP/PhoQ regulator MgrB.